Consider the following 1228-residue polypeptide: Probable phospholipid-transporting ATPase 5 (1228 aa).

The Cytoplasmic portion of the chain corresponds to 1 to 74; the sequence is MARGRIRSKL…TTRYNLITFF (74 aa). The chain crosses the membrane as a helical span at residues 75–96; it reads PKSLYEQFHRAANLYFLVAAIL. At 97 to 100 the chain is on the extracellular side; the sequence is SVFP. A helical transmembrane segment spans residues 101-123; sequence LSPFNKWSMIAPLVFVVGLSMLK. At 124–305 the chain is on the cytoplasmic side; that stretch reads EALEDWRRFM…SRIERTMDYI (182 aa). Residues 306-327 form a helical membrane-spanning segment; it reads IYTLLVLLILISCISSSGFAWE. At 328-359 the chain is on the extracellular side; it reads TEFHMPKMWYLRPGEPIDFTNPINPIYAGVVH. Residues 360-377 traverse the membrane as a helical segment; it reads LITALLLYGYLIPISLYV. At 378–934 the chain is on the cytoplasmic side; it reads SIEVVKVWQA…HGHWCYKRIA (557 aa). D425 functions as the 4-aspartylphosphate intermediate in the catalytic mechanism. A Glycyl lysine isopeptide (Lys-Gly) (interchain with G-Cter in ubiquitin) cross-link involves residue K616. Mg(2+) contacts are provided by D879 and D883. A helical membrane pass occupies residues 935–954; the sequence is QMICYFFYKNIAFGLTLFYF. At 955-968 the chain is on the extracellular side; it reads EAFTGFSGQSVYND. A helical membrane pass occupies residues 969 to 988; it reads YYLLLFNVVLTSLPVIALGV. Residues 989–1018 are Cytoplasmic-facing; sequence FEQDVSSEICLQFPALYQQGTKNLFFDWSR. A helical membrane pass occupies residues 1019 to 1041; that stretch reads ILGWMCNGVYASLVIFFLNIGII. The Extracellular segment spans residues 1042-1054; that stretch reads YSQAFRDNGQTAD. A helical membrane pass occupies residues 1055–1077; sequence MDAVGTTMFTCIIWAANVQIALT. Topologically, residues 1078 to 1083 are cytoplasmic; that stretch reads MSHFTW. Residues 1084–1104 form a helical membrane-spanning segment; the sequence is IQHVLIWGSIGMWYLFVAIYS. At 1105–1117 the chain is on the extracellular side; that stretch reads MMPPSYSGNIYRI. The helical transmembrane segment at 1118–1146 threads the bilayer; the sequence is LDEILAPAPIYWMATLLVTVAAVLPYVAH. Topologically, residues 1147–1228 are cytoplasmic; the sequence is IAFQRFLNPL…AQDAMSPRSL (82 aa).

It belongs to the cation transport ATPase (P-type) (TC 3.A.3) family. Type IV subfamily.

The protein resides in the membrane. It catalyses the reaction ATP + H2O + phospholipidSide 1 = ADP + phosphate + phospholipidSide 2.. In terms of biological role, involved in transport of phospholipids. This is Probable phospholipid-transporting ATPase 5 from Arabidopsis thaliana (Mouse-ear cress).